The primary structure comprises 370 residues: MNYSHDNWSAILAHIGKPEELDTSARNAGALTRRREIRDAATLLRLGLAYGPGGMSLREVTAWAQLHDVATLSDVALLKRLRNAADWFGILAAQTLAVRAAVTGCTSGKRLRLVDGTAISAPGGGSAEWRLHMGYDPHTCQFTDFELTDSRDAERLDRFAQTADEIRIADRGFGSRPECIRSLAFGEADYIVRVHWRGLRWLTAEGMRFDMMGFLRGLDCGKNGETTVMIGNSGNKKAGAPFPARLIAVSLPPEKALISKTRLLSENRRKGRVVQAETLEAAGHVLLLTSLPEDEYSAEQVADCYRLRWQIELAFKRLKSLLHLDALRAKEPELAKAWIFANLLAAFLIDDIIQPSLDFPPRSAGSEKKN.

Belongs to the transposase 11 family.

In terms of biological role, involved in the transposition of the insertion sequence IS186. The polypeptide is Putative transposase InsL for insertion sequence element IS186A (insL1) (Escherichia coli (strain K12)).